The primary structure comprises 615 residues: Pentatricopeptide repeat-containing protein At2g25580 (615 aa).

A disordered region spans residues 40–98; it reads FGNSNDSSEMNPREGYNGRIQNRTGSSGEVSESIHTQSQSLGSNQGRNEQSWKQSPSLS. Polar residues predominate over residues 58 to 98; it reads RIQNRTGSSGEVSESIHTQSQSLGSNQGRNEQSWKQSPSLS. PPR repeat units follow at residues 288 to 318, 319 to 353, 354 to 389, and 390 to 420; these read DLSSNHVLLEMYSNCGLANEAASVFEKMSEK, NLETWCIIIRCFAKNGFGEDAIDMFSRFKEEGNIP, DGQLFRGIFYACGMLGDVDEGLLHFESMSRDYGIAP, and SIEDYVSLVEMYALPGFLDEALEFVERMPME. A type E(+) motif region spans residues 490–520; sequence SSMQEFRAGDTNLPENDELFQLLRNLKMHMV. Residues 521 to 615 are type DYW motif; that stretch reads EVGYVAETRM…NGACTCKDYW (95 aa).

Belongs to the PPR family. PCMP-H subfamily.

This is Pentatricopeptide repeat-containing protein At2g25580 (PCMP-H75) from Arabidopsis thaliana (Mouse-ear cress).